We begin with the raw amino-acid sequence, 303 residues long: Elongation factor Ts (303 aa).

The tract at residues 81–84 (TDFV) is involved in Mg(2+) ion dislocation from EF-Tu.

Belongs to the EF-Ts family.

The protein localises to the cytoplasm. Functionally, associates with the EF-Tu.GDP complex and induces the exchange of GDP to GTP. It remains bound to the aminoacyl-tRNA.EF-Tu.GTP complex up to the GTP hydrolysis stage on the ribosome. The sequence is that of Elongation factor Ts from Mesomycoplasma hyopneumoniae (strain 232) (Mycoplasma hyopneumoniae).